Reading from the N-terminus, the 337-residue chain is Casein kinase I isoform alpha (337 aa).

Ala-2 carries the post-translational modification N-acetylalanine. Position 4 is a phosphoserine (Ser-4). An N6-acetyllysine modification is found at Lys-8. A Protein kinase domain is found at 17 to 285 (YKLVRKIGSG…YLRQLFRILF (269 aa)). ATP-binding positions include 23–31 (IGSGSFGDI) and Lys-46. Asp-136 functions as the Proton acceptor in the catalytic mechanism. A compositionally biased stretch (low complexity) spans 309-325 (AASSSGQGQQAQTPTGK). The segment at 309 to 337 (AASSSGQGQQAQTPTGKQTDKTKSNMKGF) is disordered.

This sequence belongs to the protein kinase superfamily. CK1 Ser/Thr protein kinase family. Casein kinase I subfamily. As to quaternary structure, interacts with the Axin complex. Interacts with TUT1, leading to TUT1 phosphorylation. Interacts with FAM83A, FAM83B, FAM83C, FAM83D, FAM83E, FAM83F, FAM83G and FAM83H (via DUF1669). Interaction with FAM83H recruits CSNK1A1 to keratin filaments. Post-translationally, phosphorylated by MTOR in response to mitogenic stimulation, leading to its activation.

It localises to the cytoplasm. The protein localises to the cytoskeleton. Its subcellular location is the microtubule organizing center. It is found in the centrosome. The protein resides in the chromosome. It localises to the centromere. The protein localises to the kinetochore. Its subcellular location is the nucleus speckle. It is found in the cilium basal body. The protein resides in the spindle. It carries out the reaction L-seryl-[protein] + ATP = O-phospho-L-seryl-[protein] + ADP + H(+). It catalyses the reaction L-threonyl-[protein] + ATP = O-phospho-L-threonyl-[protein] + ADP + H(+). Casein kinases are operationally defined by their preferential utilization of acidic proteins such as caseins as substrates. Can phosphorylate a large number of proteins. Participates in Wnt signaling. Phosphorylates CTNNB1 at 'Ser-45'. May phosphorylate PER1 and PER2. May play a role in segregating chromosomes during mitosis. May play a role in keratin cytoskeleton disassembly and thereby, it may regulate epithelial cell migration. Acts as a positive regulator of mTORC1 and mTORC2 signaling in response to nutrients by mediating phosphorylation of DEPTOR inhibitor. Acts as an inhibitor of NLRP3 inflammasome assembly by mediating phosphorylation of NLRP3. This chain is Casein kinase I isoform alpha (Csnk1a1), found in Mus musculus (Mouse).